A 306-amino-acid chain; its full sequence is UDP-3-O-acyl-N-acetylglucosamine deacetylase (306 aa).

Residues His79, His238, and Asp242 each coordinate Zn(2+). Catalysis depends on His265, which acts as the Proton donor.

It belongs to the LpxC family. Zn(2+) serves as cofactor.

It catalyses the reaction a UDP-3-O-[(3R)-3-hydroxyacyl]-N-acetyl-alpha-D-glucosamine + H2O = a UDP-3-O-[(3R)-3-hydroxyacyl]-alpha-D-glucosamine + acetate. It participates in glycolipid biosynthesis; lipid IV(A) biosynthesis; lipid IV(A) from (3R)-3-hydroxytetradecanoyl-[acyl-carrier-protein] and UDP-N-acetyl-alpha-D-glucosamine: step 2/6. In terms of biological role, catalyzes the hydrolysis of UDP-3-O-myristoyl-N-acetylglucosamine to form UDP-3-O-myristoylglucosamine and acetate, the committed step in lipid A biosynthesis. This Shewanella sp. (strain ANA-3) protein is UDP-3-O-acyl-N-acetylglucosamine deacetylase.